The chain runs to 31 residues: Glucagon-5 (31 aa).

The protein belongs to the glucagon family.

It localises to the secreted. Its function is as follows. Glucagon plays a key role in glucose metabolism and homeostasis. Regulates blood glucose by increasing gluconeogenesis and decreasing glycolysis. This Huso dauricus (Kaluga sturgeon) protein is Glucagon-5.